The chain runs to 267 residues: 5'-nucleotidase SurE (267 aa).

4 residues coordinate a divalent metal cation: Asp9, Asp10, Ser40, and Asn97.

It belongs to the SurE nucleotidase family. Requires a divalent metal cation as cofactor.

The protein localises to the cytoplasm. The enzyme catalyses a ribonucleoside 5'-phosphate + H2O = a ribonucleoside + phosphate. Functionally, nucleotidase that shows phosphatase activity on nucleoside 5'-monophosphates. In Helicobacter pylori (strain G27), this protein is 5'-nucleotidase SurE.